The chain runs to 179 residues: Large ribosomal subunit protein uL5c (179 aa).

It belongs to the universal ribosomal protein uL5 family. In terms of assembly, part of the 50S ribosomal subunit; contacts the 5S rRNA.

It is found in the plastid. Its subcellular location is the organellar chromatophore. Functionally, binds 5S rRNA, forms part of the central protuberance of the 50S subunit. The polypeptide is Large ribosomal subunit protein uL5c (rpl5) (Paulinella chromatophora).